Reading from the N-terminus, the 62-residue chain is Translational regulator CsrA (62 aa).

Belongs to the CsrA/RsmA family. Homodimer; the beta-strands of each monomer intercalate to form a hydrophobic core, while the alpha-helices form wings that extend away from the core.

It localises to the cytoplasm. In terms of biological role, a key translational regulator that binds mRNA to regulate translation initiation and/or mRNA stability. Mediates global changes in gene expression, shifting from rapid growth to stress survival by linking envelope stress, the stringent response and the catabolite repression systems. Usually binds in the 5'-UTR; binding at or near the Shine-Dalgarno sequence prevents ribosome-binding, repressing translation, binding elsewhere in the 5'-UTR can activate translation and/or stabilize the mRNA. Its function is antagonized by small RNA(s). The sequence is that of Translational regulator CsrA from Haemophilus ducreyi (strain 35000HP / ATCC 700724).